The following is a 218-amino-acid chain: 23 kDa integral membrane protein (218 aa).

Residues 1–12 (MATLGTGMRCLK) lie on the Cytoplasmic side of the membrane. A helical transmembrane segment spans residues 13–36 (SCVFILNIICLLCSLVLIGAGAYV). Topologically, residues 37–55 (EVKFSQYEANLHKVWQAAP) are extracellular. The chain crosses the membrane as a helical span at residues 56 to 71 (IAIIVVGVVILIVSFL). Over 72 to 82 (GCCGAIKENVC) the chain is Cytoplasmic. Residues 83–108 (MLYMYAFFLIVLLIAELVAAIVAVVY) traverse the membrane as a helical segment. Over 109–183 (KDKIDDEINT…SVFSAFLKRN (75 aa)) the chain is Extracellular. A helical transmembrane segment spans residues 184–205 (LIIVACVAFGVCFFQLLSIVIA). Topologically, residues 206 to 218 (CCLGQRIHDYQNV) are cytoplasmic.

The protein belongs to the tetraspanin (TM4SF) family.

Its subcellular location is the membrane. This chain is 23 kDa integral membrane protein, found in Schistosoma japonicum (Blood fluke).